The following is a 563-amino-acid chain: Arginine--tRNA ligase (563 aa).

A 'HIGH' region motif is present at residues 121 to 131 (PNIAKPFSIGH).

The protein belongs to the class-I aminoacyl-tRNA synthetase family. Monomer.

It localises to the cytoplasm. It carries out the reaction tRNA(Arg) + L-arginine + ATP = L-arginyl-tRNA(Arg) + AMP + diphosphate. The polypeptide is Arginine--tRNA ligase (Streptococcus agalactiae serotype III (strain NEM316)).